A 465-amino-acid polypeptide reads, in one-letter code: UDP-N-acetylmuramate--L-alanine ligase (465 aa).

115–121 (GAHGKTT) is a binding site for ATP.

This sequence belongs to the MurCDEF family.

Its subcellular location is the cytoplasm. The catalysed reaction is UDP-N-acetyl-alpha-D-muramate + L-alanine + ATP = UDP-N-acetyl-alpha-D-muramoyl-L-alanine + ADP + phosphate + H(+). It functions in the pathway cell wall biogenesis; peptidoglycan biosynthesis. Cell wall formation. This is UDP-N-acetylmuramate--L-alanine ligase from Coxiella burnetii (strain CbuG_Q212) (Coxiella burnetii (strain Q212)).